The primary structure comprises 1205 residues: MNFEGLDPGLAEFSPAMHSTLDPVLDAHLNPSLLQNVELDPEGVALEALPVQESVHIMEGVYSELHSVVAEVGVPVSVSHFDLQEEMLWVGSHGGHATSFFGPALERYSSFQVNGSDDIRQIQSLENGILFLTKNNLKYMARGGLIIFDYLLDESEDMHSLLLADNNTLLVGGLQNHVLEIDLNTVQETQKYAVETPGVTIMRQTNRFFFCGHTSGKVSLRDLRSFKVEHEFDAFSGSLSDFDVHGNLLAACGFSSRLTGLACDRFLKVYDLRMMRAITPLQVHVDPAFLRFIPTYTSRLAIISQSGQCQFCEPTGLANPADIFHVNPVGPLLMTFDVSASKQALAFGDSEGCVHLWTDSPEPSFNPYSRETEFALPCLVDSLPALDWSQDLLPLSLIPVPLTTDALLSDWPAANSAPAPRRAPPVDAEILRTMKKVGFIGYAPNPRTRLRNQIPYRLKESDHEFDNFSQVTESPTGREEEPLHTVSKKYRKVTIKYSKLGLEDFDFKHYNKTLFAGLEPHIPNAYCNCMIQVLYFLEPVRCLIQNHLCQKEFCLACELGFLFHMLDLSRGDPCQGSNFLRAFRTIPEASALGLILADSDEASGKGSLARLIQRWNRFILTQLHQDMQELEVPQAYRGAGGSFCSSGDSIIGQLFSCEMENCSLCRCGSETVRASSTLLFTLSYPEDKTGKNYDFAQVLKRSICLEQNTQAWCDSCEKYQPTIQTRNIRHLPDILVINCEVNSSKEADFWRLQAEVAFKIAVKKFGGEVKSKEFALADRKELRSPEGFLCCSSMEELKNVWLPFSIRMKMTKNKGLDVCNWADEHELSSLGTPSQWGPARAEEEHGVYVYDLMATVVHILDSRTGGSLVAHIKVGETYHQRKEGVTHQQWYLFNDFLIEPIDKYEAVQFDMNWKVPAILYYVKRNLNSRYNLNSKNPIEASVLLAEASLARKQRKTHTTFIPLMLNEMPQVGDLVGLDAEFVTLNEEEAELRSDGTKSTIKPSQMSVARITCVRGQGPNEGIPFIDDYISTQEQVVDYLTQYSGIKPGDLDAKISSKHLTTLKSTYLKLRFLIDIGVKFVGHGLQKDFRVINLMVPKDQVLDTVYLFHMPRKRMISLRFLAWYFLDLKIQGETHDSIEDARTALQLYRKYLELSKNGAEPESFHKVLKGLYEKGRKMDWKVPEPESQSSPKSKAGLRPGALGWVG.

WD repeat units lie at residues 153–193 (DESE…QKYA), 195–231 (ETPG…VEHE), 244–280 (VHGN…AITP), and 328–367 (PVGP…SFNP). Residues 368–484 (YSRETEFALP…PTGREEEPLH (117 aa)) form a linker region. One can recognise a USP domain in the interval 485-924 (TVSKKYRKVT…VPAILYYVKR (440 aa)). At Ser784 the chain carries Phosphoserine. The Exonuclease domain occupies 975–1147 (VGLDAEFVTL…EDARTALQLY (173 aa)). A divalent metal cation contacts are provided by Asp978, Glu980, Asp1087, and Asp1139. The segment at 1179–1205 (WKVPEPESQSSPKSKAGLRPGALGWVG) is disordered. Over residues 1184 to 1193 (PESQSSPKSK) the composition is skewed to low complexity. Residue Ser1189 is modified to Phosphoserine.

It belongs to the peptidase C19 family. PAN2 subfamily. As to quaternary structure, forms a heterotrimer with an asymmetric homodimer of the regulatory subunit PAN3 to form the poly(A)-nuclease (PAN) deadenylation complex. Interacts with PAN3 isoform 1/Pan3L and isoform 3/Pan3S. Interacts with ZFP36. Requires a divalent metal cation as cofactor.

Its subcellular location is the cytoplasm. The protein resides in the P-body. It is found in the nucleus. It catalyses the reaction Exonucleolytic cleavage of poly(A) to 5'-AMP.. Its activity is regulated as follows. Positively regulated by the regulatory subunit PAN3. Functionally, catalytic subunit of the poly(A)-nuclease (PAN) deadenylation complex, one of two cytoplasmic mRNA deadenylases involved in general and miRNA-mediated mRNA turnover. PAN specifically shortens poly(A) tails of RNA and the activity is stimulated by poly(A)-binding protein (PABP). PAN deadenylation is followed by rapid degradation of the shortened mRNA tails by the CCR4-NOT complex. Deadenylated mRNAs are then degraded by two alternative mechanisms, namely exosome-mediated 3'-5' exonucleolytic degradation, or deadenylation-dependent mRNA decaping and subsequent 5'-3' exonucleolytic degradation by XRN1. Also acts as an important regulator of the HIF1A-mediated hypoxic response. Required for HIF1A mRNA stability independent of poly(A) tail length regulation. This chain is PAN2-PAN3 deadenylation complex catalytic subunit Pan2, found in Rattus norvegicus (Rat).